The chain runs to 479 residues: MFS-type transporter lnaF (479 aa).

The next 11 membrane-spanning stretches (helical) occupy residues 47 to 67, 71 to 91, 104 to 124, 136 to 156, 177 to 197, 208 to 228, 250 to 270, 283 to 303, 306 to 326, 344 to 364, and 372 to 392; these read WIYL…GFTP, GLII…SGAI, LLCI…GPLI, WCFY…VFLL, LVGL…LSWG, IIGL…VQWW, IFSF…PIWF, LMSI…AVLV, IGFY…GAGL, IPFG…VQAV, and LAIA…ISVA. An N-linked (GlcNAc...) asparagine glycan is attached at asparagine 416. The helical transmembrane segment at 442–462 threads the bilayer; that stretch reads LAITQALYVGVALSSLAIVGA.

Belongs to the major facilitator superfamily. TCR/Tet family.

It is found in the cell membrane. Functionally, MFS-type transporter; part of the lnb gene cluster that mediates the biosynthesis of diastereomeric piperazines. Lna and lnb clusters encode sets of enzymes that produce overlapping sets of previously undescribed metabolites such as piperazinomycin-like metabolites or morpholine. The lna and lnb biosynthetic pathways appear to be part of a signaling network that controls the formation of sclerotia, a resilient overwintering structure. May be involved in the secretion of the metabolites produced by the lna and lnb clusters. This chain is MFS-type transporter lnaF, found in Aspergillus flavus (strain ATCC 200026 / FGSC A1120 / IAM 13836 / NRRL 3357 / JCM 12722 / SRRC 167).